The following is a 93-amino-acid chain: Phosphoribosyl-ATP pyrophosphatase (93 aa).

The protein belongs to the PRA-PH family.

It localises to the cytoplasm. It carries out the reaction 1-(5-phospho-beta-D-ribosyl)-ATP + H2O = 1-(5-phospho-beta-D-ribosyl)-5'-AMP + diphosphate + H(+). It participates in amino-acid biosynthesis; L-histidine biosynthesis; L-histidine from 5-phospho-alpha-D-ribose 1-diphosphate: step 2/9. This chain is Phosphoribosyl-ATP pyrophosphatase, found in Mycolicibacterium gilvum (strain PYR-GCK) (Mycobacterium gilvum (strain PYR-GCK)).